We begin with the raw amino-acid sequence, 249 residues long: Bacillaene synthase decarboxylase PksI (249 aa).

Residue H230 is part of the active site.

The protein belongs to the enoyl-CoA hydratase/isomerase family. In terms of assembly, homotrimer. Does not form a heterotrimeric complex with PksH.

The protein localises to the cytoplasm. Its pathway is antibiotic biosynthesis; bacillaene biosynthesis. Involved in some intermediate steps for the synthesis of the antibiotic polyketide bacillaene which is involved in secondary metabolism. Catalyzes the decarboxylation of the 3-methylglutaconyl group tethered to PksL to a 3-methylcrotonyl moiety. This is Bacillaene synthase decarboxylase PksI (pksI) from Bacillus subtilis (strain 168).